Here is a 714-residue protein sequence, read N- to C-terminus: Elongation factor G-like protein (714 aa).

The tr-type G domain maps to 21–289 (GGVRNVVLVG…VATRGFPSPM (269 aa)). Residues 30 to 37 (GPSGGGKT) are G1. 30–37 (GPSGGGKT) provides a ligand contact to GTP. A G2 region spans residues 73-77 (QRSVG). Residues 94–97 (DTPG) are G3. GTP is bound by residues 94–98 (DTPGY) and 148–151 (TKLD). A G4 region spans residues 148–151 (TKLD). Positions 267-269 (CSS) are G5.

The protein belongs to the TRAFAC class translation factor GTPase superfamily. Classic translation factor GTPase family. EF-G/EF-2 subfamily.

This Mycobacterium tuberculosis (strain ATCC 25618 / H37Rv) protein is Elongation factor G-like protein.